The sequence spans 338 residues: Solute carrier family 35 member G5 (338 aa).

The interval 1–21 is disordered; it reads MAGSHPYFNLPDSTHPSPPSA. 9 helical membrane passes run 37–57, 67–87, 105–125, 160–180, 190–210, 221–241, 250–270, 281–301, and 305–325; these read TNGL…VGPL, LPSL…ALPL, CFCA…VQVV, CGLL…LWTL, ALGY…LLVY, TVAF…LFVL, LLSW…FTCV, LVCA…YYVL, and VAPS…IITA. An EamA 1 domain is found at 49-174; it reads LPAGFVGPLS…SILGLIIIVG (126 aa). The EamA 2 domain occupies 272 to 325; it reads YAVTKAHPALVCAVLHSEVVVALILQYYVLHETVAPSDIMGAGIVLGSIAIITA.

The protein belongs to the SLC35G solute transporter family.

It localises to the membrane. The polypeptide is Solute carrier family 35 member G5 (SLC35G5) (Pan troglodytes (Chimpanzee)).